The primary structure comprises 545 residues: Membrane protein insertase YidC (545 aa).

Helical transmembrane passes span 350–370, 424–444, 461–481, and 498–518; these read IIGNWGWAIVVLTIIVKAVLY, LPMLLQIPVFIGLYWALFASV, ADPYYILPIIMAATMFAQTYL, and PLVFSVMFFFFPAGLVLYWVV.

This sequence belongs to the OXA1/ALB3/YidC family. Type 1 subfamily. In terms of assembly, interacts with the Sec translocase complex via SecD. Specifically interacts with transmembrane segments of nascent integral membrane proteins during membrane integration.

It is found in the cell inner membrane. Required for the insertion and/or proper folding and/or complex formation of integral membrane proteins into the membrane. Involved in integration of membrane proteins that insert both dependently and independently of the Sec translocase complex, as well as at least some lipoproteins. Aids folding of multispanning membrane proteins. The polypeptide is Membrane protein insertase YidC (Neisseria gonorrhoeae (strain NCCP11945)).